A 428-amino-acid polypeptide reads, in one-letter code: Adenylosuccinate synthetase 1 (428 aa).

GTP is bound by residues 12 to 18 (GDEGKGK) and 40 to 42 (GHT). The active-site Proton acceptor is the aspartate 13. Mg(2+) is bound by residues aspartate 13 and glycine 40. IMP contacts are provided by residues 13-16 (DEGK), 38-41 (NAGH), threonine 133, arginine 147, asparagine 224, threonine 239, and arginine 303. Histidine 41 serves as the catalytic Proton donor. 299–305 (TTTGRRR) serves as a coordination point for substrate. GTP is bound by residues arginine 305, 331 to 333 (KLD), and 413 to 415 (GVG).

It belongs to the adenylosuccinate synthetase family. In terms of assembly, homodimer. The cofactor is Mg(2+).

The protein resides in the cytoplasm. It catalyses the reaction IMP + L-aspartate + GTP = N(6)-(1,2-dicarboxyethyl)-AMP + GDP + phosphate + 2 H(+). It participates in purine metabolism; AMP biosynthesis via de novo pathway; AMP from IMP: step 1/2. Functionally, plays an important role in the de novo pathway and in the salvage pathway of purine nucleotide biosynthesis. Catalyzes the first committed step in the biosynthesis of AMP from IMP. The sequence is that of Adenylosuccinate synthetase 1 from Laccaria bicolor (strain S238N-H82 / ATCC MYA-4686) (Bicoloured deceiver).